A 469-amino-acid chain; its full sequence is GTPase Der (469 aa).

EngA-type G domains follow at residues 30–193 (PVLA…PEVA) and 203–376 (RRVA…ASWD). GTP contacts are provided by residues 36–43 (GRPNVGKS), 83–87 (DTGGW), 145–148 (NKVD), 209–216 (GKPNVGKS), 256–260 (DTAGL), and 321–324 (NKWD). Residues 377–459 (TRIPTGPLNS…PIRINVRVRE (83 aa)) form the KH-like domain.

Belongs to the TRAFAC class TrmE-Era-EngA-EngB-Septin-like GTPase superfamily. EngA (Der) GTPase family. As to quaternary structure, associates with the 50S ribosomal subunit.

Functionally, GTPase that plays an essential role in the late steps of ribosome biogenesis. The protein is GTPase Der of Mycobacterium marinum (strain ATCC BAA-535 / M).